Here is an 814-residue protein sequence, read N- to C-terminus: Tax1-binding protein 1 homolog (814 aa).

A phosphoserine mark is found at S124, S138, and S225. A coiled-coil region spans residues 144 to 623; sequence TTKAGLLELK…KELTKSLEDQ (480 aa). The interval 320–420 is oligomerization; the sequence is EEISKLQSCL…ELQLHAVKKD (101 aa). S619 bears the Phosphoserine; by IKKA mark. Position 632 is a phosphoserine (S632). Residue S693 is modified to Phosphoserine; by IKKA. Residues 701–733 form a disordered region; it reads SQPARNLSRPDGLEDPEDSREDENVPIPPDPAN. 2 UBZ1-type zinc fingers span residues 752 to 778 and 779 to 805; these read HKKCPLCELMFPPNYDQTKFEEHVESH and WKVCPMCSEQFPPDYDQQGFERHVQTH. Zn(2+)-binding residues include C755, C758, H774, H778, C782, C785, H801, and H805.

In terms of assembly, homooligomer. Interacts with TNFAIP3. Interacts with STARD13. Interacts with MYO6. Interacts with TOM1; the interaction is indirect and is mediated by MYO6, which acts as a bridge between TOM1 and TAX1BP1. Interacts with MAVS; this interaction induces MAVS polyubiquitination. Interacts with TNIP1. Interacts with TRAF6; this interaction mediates deubiquitination of TRAF6 and inhibition of NF-kappa-B activation. Interacts with RIPK1; this interaction negatively regulates RIPK1 ubiquitination. Interacts with NBR1. Interacts with TBK1. Interacts with RB1CC1. Interacts with SQSTM1. Interacts with AZI2. Interacts with TICAM1 and TRIM32; these interactions target TICAM1 to TAX1BP1-mediated selective autophagic degradation. In terms of processing, phosphorylated in the C-terminal region by CHUK/IKKA leading to NF-kappa-B signaling down-regulation.

The protein resides in the cytoplasm. It is found in the mitochondrion. Its subcellular location is the preautophagosomal structure. It localises to the cytoplasmic vesicle. The protein localises to the autophagosome. Ubiquitin-binding adapter that participates in inflammatory, antiviral and innate immune processes as well as selective autophagy regulation. Plays a key role in the negative regulation of NF-kappa-B and IRF3 signalings by acting as an adapter for the ubiquitin-editing enzyme A20/TNFAIP3 to bind and inactivate its substrates. Disrupts the interactions between the E3 ubiquitin ligase TRAF3 and TBK1/IKBKE to attenuate 'Lys63'-linked polyubiquitination of TBK1 and thereby IFN-beta production. Also recruits A20/TNFAIP3 to ubiquitinated signaling proteins TRAF6 and RIPK1, leading to their deubiquitination and disruption of IL-1 and TNF-induced NF-kappa-B signaling pathways. Inhibits virus-induced apoptosis by inducing the 'Lys-48'-linked polyubiquitination and degradation of MAVS via recruitment of the E3 ligase ITCH, thereby attenuating MAVS-mediated apoptosis signaling. As a macroautophagy/autophagy receptor, facilitates the xenophagic clearance of pathogenic bacteria such as Salmonella typhimurium and Mycobacterium tuberculosis. Upon NBR1 recruitment to the SQSTM1-ubiquitin condensates, acts as the major recruiter of RB1CC1 to these ubiquitin condensates to promote their autophagic degradation. Mediates the autophagic degradation of other substrates including TICAM1. This chain is Tax1-binding protein 1 homolog (Tax1bp1), found in Mus musculus (Mouse).